A 103-amino-acid polypeptide reads, in one-letter code: Putative double-stranded DNA mimic protein APJL_1366 (103 aa).

This sequence belongs to the putative dsDNA mimic protein family.

Functionally, may act as a double-stranded DNA (dsDNA) mimic. Probably regulates the activity of a dsDNA-binding protein. The polypeptide is Putative double-stranded DNA mimic protein APJL_1366 (Actinobacillus pleuropneumoniae serotype 3 (strain JL03)).